A 1101-amino-acid chain; its full sequence is MSAKAISEQTGKELLYKFICTTSAIQNRFKYARVTPDTDWARLLQDHPWLLSQNLVVKPDQLIKRRGKLGLVGVNLTLDGVKSWLKPRLGQEATVGKATGFLKNFLIEPFVPHSQAEEFYVCIYATREGDYVLFHHEGGVDVGDVDAKAQKLLVGVDEKLNPEDIKKHLLVHAPEDKKEILASFISGLFNFYEDLYFTYLEINPLVVTKDGVYVLDLAAKVDATADYICKVKWGDIEFPPPFGREAYPEEAYIADLDAKSGASLKLTLLNPKGRIWTMVAGGGASVVYSDTICDLGGVNELANYGEYSGAPSEQQTYDYAKTILSLMTREKHPDGKILIIGGSIANFTNVAATFKGIVRAIRDYQGPLKEHEVTIFVRRGGPNYQEGLRVMGEVGKTTGIPIHVFGTETHMTAIVGMALGHRPIPNQPPTAAHTANFLLNASGSTSTPAPSRTASFSESRADEVAPAKKAKPAMPQDSVPSPRSLQGKSTTLFSRHTKAIVWGMQTRAVQGMLDFDYVCSRDEPSVAAMVYPFTGDHKQKFYWGHKEILIPVFKNMADAMRKHPEVDVLINFASLRSAYDSTMETMNYAQIRTIAIIAEGIPEALTRKLIKKADQKGVTIIGPATVGGIKPGCFKIGNTGGMLDNILASKLYRPGSVAYVSRSGGMSNELNNIISRTTDGVYEGVAIGGDRYPGSTFMDHVLRYQDTPGVKMIVVLGEIGGTEEYKICRGIKEGRLTKPIVCWCIGTCATMFSSEVQFGHAGACANQASETAVAKNQALKEAGVFVPRSFDELGEIIQSVYEDLVANGVIVPAQEVPPPTVPMDYSWARELGLIRKPASFMTSICDERGQELIYAGMPITEVFKEEMGIGGVLGLLWFQKRLPKYSCQFIEMCLMVTADHGPAVSGAHNTIICARAGKDLVSSLTSGLLTIGDRFGGALDAAAKMFSKAFDSGIIPMEFVNKMKKEGKLIMGIGHRVKSINNPDMRVQILKDYVRQHFPATPLLDYALEVEKITTSKKPNLILNVDGLIGVAFVDMLRNCGSFTREEADEYIDIGALNGIFVLGRSMGFIGHYLDQKRLKQGLYRHPWDDISYVLPEHMSM.

The 262-residue stretch at 4-265 (KAISEQTGKE…LDAKSGASLK (262 aa)) folds into the ATP-grasp domain. ATP-binding residues include Lys-58, Arg-66, Gly-67, Pro-109, Val-111, and Glu-118. Position 131 is a phosphotyrosine (Tyr-131). ATP is bound at residue Asp-216. Positions 257, 260, and 262 each coordinate Mg(2+). A Phosphoserine modification is found at Ser-263. Positions 309, 346, 348, 364, and 379 each coordinate citrate. Residues 441-457 (ASGSTSTPAPSRTASFS) show a composition bias toward low complexity. The interval 441-487 (ASGSTSTPAPSRTASFSESRADEVAPAKKAKPAMPQDSVPSPRSLQG) is disordered. Thr-447 carries the post-translational modification Phosphothreonine. Ser-451 carries the phosphoserine modification. Residue Ser-455 is modified to Phosphoserine; by PKA and PKB/AKT1 or PKB/AKT2 or BCKDK. A phosphoserine mark is found at Ser-459 and Ser-481. Positions 478–487 (SVPSPRSLQG) are enriched in polar residues. Residues Lys-540, Lys-546, and Lys-554 each carry the N6-acetyllysine; alternate modification. Glycyl lysine isopeptide (Lys-Gly) (interchain with G-Cter in ubiquitin); alternate cross-links involve residues Lys-540, Lys-546, and Lys-554. At Thr-639 the chain carries Phosphothreonine. Ser-663 carries the phosphoserine modification. Tyr-682 is modified (phosphotyrosine). Residue His-760 is the Tele-phosphohistidine intermediate of the active site. Residue 779–789 (LKEAGVFVPRS) participates in CoA binding. Ser-839 is subject to Phosphoserine. N6-acetyllysine is present on residues Lys-948, Lys-968, Lys-978, and Lys-1077. At Ser-1100 the chain carries Phosphoserine.

This sequence in the N-terminal section; belongs to the succinate/malate CoA ligase beta subunit family. The protein in the C-terminal section; belongs to the succinate/malate CoA ligase alpha subunit family. In terms of assembly, homotetramer. The cofactor is Mg(2+). In terms of processing, phosphorylated by PKA and GSK3 in a sequential manner; phosphorylation results in activation of its activity. Phosphorylation on Thr-447 and Ser-451 depends on the phosphorylation state of Ser-455. Phosphorylation on Ser-455 is decreased by prior phosphorylation on the other 2 residues. Phosphorylated at Ser-455 by BCKDK and dephosphorylated by protein phosphatase PPM1K. ISGylated. Post-translationally, acetylated at Lys-540, Lys-546 and Lys-554 by KAT2B/PCAF. Acetylation is promoted by glucose and stabilizes the protein, probably by preventing ubiquitination at the same sites. Acetylation promotes de novo lipid synthesis. Deacetylated by SIRT2. In terms of processing, ubiquitinated at Lys-540, Lys-546 and Lys-554 by the BCR(KLHL25) E3 ubiquitin ligase complex and UBR4, leading to its degradation. Ubiquitination is probably inhibited by acetylation at same site. BCR(KLHL25)-mediated degradation of ACLY promotes fatty acid oxidation and is required for differentiation of inducible regulatory T (iTreg) cells.

The protein resides in the cytoplasm. The protein localises to the cytosol. The enzyme catalyses oxaloacetate + acetyl-CoA + ADP + phosphate = citrate + ATP + CoA. Phosphorylation results in activation of its activity. Glucose 6-phosphate, fructose 6-phosphate, fructose 2,6-bisphosphate, ribulose 5-phosphate, and fructose 1,6-bisphosphate also act as activators. Catalyzes the cleavage of citrate into oxaloacetate and acetyl-CoA, the latter serving as common substrate in multiple biochemical reactions in protein, carbohydrate and lipid metabolism. This Homo sapiens (Human) protein is ATP-citrate synthase (ACLY).